A 248-amino-acid chain; its full sequence is mRNA-decapping protein OPG122 (248 aa).

A Nudix hydrolase domain is found at 45–227 (HKRVSVSAIL…IAKYALDTAK (183 aa)). A Nudix box motif is present at residues 126–147 (GIPKRGENVPECLSREIKEEVN). Glu132 serves as a coordination point for Mg(2+). The active-site Nucleophile is the Glu141. Glu145 contributes to the Mn(2+) binding site. Position 167 (Asp167) interacts with Mg(2+).

This sequence belongs to the Nudix hydrolase family. Mg(2+) is required as a cofactor. It depends on Mn(2+) as a cofactor.

The protein resides in the host mitochondrion. Functionally, decapping enzyme that remove the protective 5'-cap from both host and viral mRNAs to commit transcripts for decay by the cellular exonuclease XRN1. Preferentially targets spliced mRNAs and since all viral genes are intronless, it preferentially targets host over viral transcripts. Acceleration of the turnover of cellular transcripts promotes the shutoff of host protein synthesis and therefore diminish the magnitude of antiviral response. This is mRNA-decapping protein OPG122 (OPG122) from Vaccinia virus (strain Copenhagen) (VACV).